The sequence spans 233 residues: MTIGIIGAMEEEVELLKNTMPHVEEVVIGGAKFYVGEIAGKEVVLLESGIGKVNAAIGTTLLADRFKPEIIINTGSAGGMAEGLAVGDVIISDRLAYGDVDVTEFGYTYGQVPRMPAFYQGDAVLLKKAETIYRDYFSQSENKAVYGLVITNDSFIMRPDQHELIRTFFPDVKAVEMEAAAIAQVAYQFDIPFLIIRAISDLANQEATISFDEFIHLAAKQSATCIIELLKTI.

The active-site Proton acceptor is the glutamate 12. Residues glycine 78, isoleucine 156, and 177-178 each bind substrate; that span reads ME. Aspartate 201 acts as the Proton donor in catalysis.

Belongs to the PNP/UDP phosphorylase family. MtnN subfamily.

The enzyme catalyses S-adenosyl-L-homocysteine + H2O = S-(5-deoxy-D-ribos-5-yl)-L-homocysteine + adenine. The catalysed reaction is S-methyl-5'-thioadenosine + H2O = 5-(methylsulfanyl)-D-ribose + adenine. It catalyses the reaction 5'-deoxyadenosine + H2O = 5-deoxy-D-ribose + adenine. The protein operates within amino-acid biosynthesis; L-methionine biosynthesis via salvage pathway; S-methyl-5-thio-alpha-D-ribose 1-phosphate from S-methyl-5'-thioadenosine (hydrolase route): step 1/2. In terms of biological role, catalyzes the irreversible cleavage of the glycosidic bond in both 5'-methylthioadenosine (MTA) and S-adenosylhomocysteine (SAH/AdoHcy) to adenine and the corresponding thioribose, 5'-methylthioribose and S-ribosylhomocysteine, respectively. Also cleaves 5'-deoxyadenosine, a toxic by-product of radical S-adenosylmethionine (SAM) enzymes, into 5-deoxyribose and adenine. The sequence is that of 5'-methylthioadenosine/S-adenosylhomocysteine nucleosidase from Listeria welshimeri serovar 6b (strain ATCC 35897 / DSM 20650 / CCUG 15529 / CIP 8149 / NCTC 11857 / SLCC 5334 / V8).